The primary structure comprises 298 residues: Probable oxidoreductase (298 aa).

Residue 9 to 33 (VVTGGASGLGAETVRALAAAGAEVT) participates in NAD(+) binding. Residue Ser139 participates in substrate binding. Tyr165 (proton acceptor) is an active-site residue.

Belongs to the short-chain dehydrogenases/reductases (SDR) family.

In Streptomyces antibioticus, this protein is Probable oxidoreductase.